We begin with the raw amino-acid sequence, 134 residues long: Phosphoribosyl-AMP cyclohydrolase (134 aa).

D93 lines the Mg(2+) pocket. A Zn(2+)-binding site is contributed by C94. The Mg(2+) site is built by D95 and D97. Positions 112 and 119 each coordinate Zn(2+).

This sequence belongs to the PRA-CH family. In terms of assembly, homodimer. Requires Mg(2+) as cofactor. Zn(2+) is required as a cofactor.

The protein resides in the cytoplasm. The catalysed reaction is 1-(5-phospho-beta-D-ribosyl)-5'-AMP + H2O = 1-(5-phospho-beta-D-ribosyl)-5-[(5-phospho-beta-D-ribosylamino)methylideneamino]imidazole-4-carboxamide. Its pathway is amino-acid biosynthesis; L-histidine biosynthesis; L-histidine from 5-phospho-alpha-D-ribose 1-diphosphate: step 3/9. Catalyzes the hydrolysis of the adenine ring of phosphoribosyl-AMP. The sequence is that of Phosphoribosyl-AMP cyclohydrolase from Caulobacter sp. (strain K31).